The chain runs to 3073 residues: Adhesion G-protein coupled receptor G4 (3073 aa).

The signal sequence occupies residues 1–25; that stretch reads MRKHILHQRLCGLILVSSFIFLTDS. Residues 26-2691 are Extracellular-facing; sequence LSLKGKRLDF…RSTVDAVNER (2666 aa). The Pentraxin (PTX) domain occupies 29–228; that stretch reads KGKRLDFYGE…SPTVDRRLRC (200 aa). Disulfide bonds link Cys58/Cys123 and Cys200/Cys228. Asn233 carries an N-linked (GlcNAc...) asparagine glycan. The tract at residues 253–272 is disordered; that stretch reads SQTTGLNPHKTSHSSTLLPE. N-linked (GlcNAc...) asparagine glycosylation is present at Asn662. Polar residues-rich tracts occupy residues 671–696 and 929–951; these read GNAT…ESKV and GNSA…SSST. 2 disordered regions span residues 671–697 and 924–951; these read GNAT…SKVT and SEKS…SSST. Asn1141, Asn1304, and Asn1495 each carry an N-linked (GlcNAc...) asparagine glycan. 3 disordered regions span residues 1565 to 1595, 1741 to 1760, and 1945 to 1972; these read FTSS…AGPT, TLTN…STPT, and ITLS…SDSR. Residues 1945 to 1954 show a composition bias toward polar residues; it reads ITLSSNPSVN. Low complexity predominate over residues 1955–1972; sequence SRATSPTWSSSSLPSDSR. The GAIN-B domain occupies 2535 to 2684; that stretch reads SSEEVIAPQI…GVLMDLSRST (150 aa). 2 cysteine pairs are disulfide-bonded: Cys2635-Cys2666 and Cys2654-Cys2668. Residues 2635-2684 form a GPS region; it reads CAFWDFDTNNGLGGWNPSGCKLKESNINYTICQCNHLTHFGVLMDLSRST. The segment at 2673–2684 is stachel; sequence HFGVLMDLSRST. A helical transmembrane segment spans residues 2692–2712; sequence ILVIITYTGCGISSIFLGIAM. Topologically, residues 2713–2728 are cytoplasmic; the sequence is VTYIAFHKLRKDYPSK. The chain crosses the membrane as a helical span at residues 2729 to 2749; it reads ILINLCTALLMLNLAFLVNSW. The Extracellular portion of the chain corresponds to 2750 to 2755; sequence LTSFQK. Residues 2756–2776 traverse the membrane as a helical segment; sequence VGLCITAAVALHYFLLVSLTW. Cysteines 2759 and 2836 form a disulfide. At 2777–2798 the chain is on the cytoplasmic side; the sequence is MGLEAVHMYFALVKVFNTYIPN. The helical transmembrane segment at 2799–2819 threads the bilayer; that stretch reads YILKFCLAGWGIPAITVAIIL. Over 2820-2842 the chain is Extracellular; it reads SVRKDLYGTLSPTTPFCWIKDDH. A helical transmembrane segment spans residues 2843-2863; it reads IFYISVVAYFCLIFLMNLSMF. Residues 2864-2892 are Cytoplasmic-facing; sequence CTVLVQLTSVKSQSQKTRKKMILNDLKGT. A helical membrane pass occupies residues 2893-2913; that stretch reads ISLTFLLGLTWGFAFFAWGPV. Arg2914 is a topological domain (extracellular). Residues 2915–2935 form a helical membrane-spanning segment; the sequence is IFFLYLFAICNTLQGFLIFVF. Topologically, residues 2936–3073 are cytoplasmic; that stretch reads YCVMKESVRE…SSGLGEMFNL (138 aa).

Belongs to the G-protein coupled receptor 2 family. Adhesion G-protein coupled receptor (ADGR) subfamily. In terms of assembly, homodimer; homodimerizes via its Pentraxin domain in a calcium-independent manner. Heterodimer of 2 chains generated by proteolytic processing; the large extracellular N-terminal fragment and the membrane-bound C-terminal fragment predominantly remain associated and non-covalently linked. In terms of processing, autoproteolytically processed at the GPS region of the GAIN-B domain; this cleavage modulates receptor activity.

Its subcellular location is the membrane. Its activity is regulated as follows. Forms a heterodimer of 2 chains generated by proteolytic processing that remain associated through non-covalent interactions mediated by the GAIN-B domain. In the inactivated receptor, the Stachel sequence (also named stalk) is embedded in the GAIN-B domain, where it adopts a beta-strand conformation. On activation, the Stachel moves into the 7 transmembrane region and adopts a twisted hook-shaped configuration that forms contacts within the receptor, leading to coupling of a G-alpha protein, which activates signaling. The cleaved GAIN-B and N-terminal domains can then dissociate from the rest of the receptor. Its function is as follows. Orphan adhesion G-protein coupled receptor (aGPCR). Ligand binding causes a conformation change that triggers signaling via guanine nucleotide-binding proteins (G proteins) and modulates the activity of downstream effectors, such as adenylate cyclase. ADGRG4 is coupled to G(s) G proteins and mediates activation of adenylate cyclase activity. May be act as sensor of mechanical forces. The chain is Adhesion G-protein coupled receptor G4 from Mus musculus (Mouse).